The chain runs to 150 residues: UPF0756 membrane protein APL_0366 (150 aa).

The next 4 membrane-spanning stretches (helical) occupy residues 12–34, 52–72, 82–102, and 123–143; these read LVVL…ATVL, HGLS…IVSG, FLNW…WLGG, and IIGV…AGIL.

The protein belongs to the UPF0756 family.

It is found in the cell membrane. This is UPF0756 membrane protein APL_0366 from Actinobacillus pleuropneumoniae serotype 5b (strain L20).